The chain runs to 1431 residues: Zinc finger protein 687b (1431 aa).

Disordered stretches follow at residues 24–481 (KEAI…RPLK) and 504–538 (KGGA…TTAG). A compositionally biased stretch (low complexity) spans 61 to 73 (SPSPSTDSQSDPS). Residues 103–122 (GFVSSGGSVHMSQSRGQPNG) are compositionally biased toward polar residues. 3 stretches are compositionally biased toward low complexity: residues 174-188 (MQLL…EMNL), 196-209 (APAN…AASP), and 217-248 (LLST…ASSP). Polar residues predominate over residues 249–267 (LATSLTEPFNGTPRLSSSA). The segment covering 311 to 324 (SQSPSIPPSTSISP) has biased composition (low complexity). Positions 342-359 (RAQQNWLSTAAQTGNGKS) are enriched in polar residues. Residues 361–377 (PQEERNPEHVIEERDSP) are compositionally biased toward basic and acidic residues. Over residues 385–410 (PKSSMPTSAVTKRSCSPAAASSPSAA) the composition is skewed to low complexity. Basic and acidic residues predominate over residues 438–449 (DGGKGDTDKIEV). Residues 519-528 (QTGGRAGPVK) show a composition bias toward gly residues. The C2H2-type 1; degenerate zinc finger occupies 674-692 (YRCLECGDSFALERSLARH). The segment at 754 to 816 (TTPIGMLSPS…GPQSPQALMP (63 aa)) is disordered. Residues 760–775 (LSPSLSSPPLTSSTTP) are compositionally biased toward low complexity. Residues 781–802 (APSTSSPLKDSPSPGTASTQPS) show a composition bias toward polar residues. Residues 830-853 (FKCPECQAQFLSKAELVTHFQQIR) form a C2H2-type 2; degenerate zinc finger. 4 consecutive C2H2-type zinc fingers follow at residues 919–942 (YRCS…QTAH), 947–970 (HKCP…TSQH), 982–1004 (YKCV…FDTH), and 1013–1036 (FKCP…KTAH). Residues 1041 to 1120 (VKAETPPTTS…QVSSPESGNM (80 aa)) are disordered. The segment covering 1043–1057 (AETPPTTSSPVSAPA) has biased composition (low complexity). Over residues 1058-1075 (GNSTSKPKPATENNSDEL) the composition is skewed to polar residues. Acidic residues predominate over residues 1080-1111 (GEEEEEGEDEEGEQEGEEREDEEEEENEEEEQ). A C2H2-type 7 zinc finger spans residues 1122–1145 (WRCKECKKRFPEREDYIDHMKNEH). A C2H2-type 8; degenerate zinc finger spans residues 1205-1227 (WHCSEGKRTFSSRLILEKHIRVR). A disordered region spans residues 1225–1310 (RVRHGIRSRQ…EEEDGTFRCT (86 aa)). 2 consecutive C2H2-type zinc fingers follow at residues 1307-1329 (FRCT…IPVH) and 1337-1360 (QQCL…FITH). Positions 1362–1392 (LRQGQHDRNASPGASPQYGSPSSPKAGEDGD) are disordered. The span at 1373–1384 (PGASPQYGSPSS) shows a compositional bias: polar residues. The C2H2-type 11 zinc-finger motif lies at 1395 to 1425 (VSCRVCGRRFDKASDLNTHFRTHGMAFITAH).

The protein belongs to the krueppel C2H2-type zinc-finger protein family. Widely expressed with highest levels in eye, spleen and ovary.

The protein resides in the nucleus. May be involved in transcriptional regulation. The polypeptide is Zinc finger protein 687b (znf687b) (Danio rerio (Zebrafish)).